We begin with the raw amino-acid sequence, 348 residues long: Organic solute transporter alpha-like protein 3 (348 aa).

The Extracellular portion of the chain corresponds to 1–49 (MAKEHGAMRSVLNLIGSVMLPQDTSNCSDRHDTPSAPEFLSHLQPFQTV). A glycan (N-linked (GlcNAc...) asparagine) is linked at N26. The chain crosses the membrane as a helical span at residues 50 to 70 (LLSIASFSTTIVLCLSLIHWF). Topologically, residues 71–84 (YVYKYVSIEKRRNK) are cytoplasmic. The helical transmembrane segment at 85–105 (LYWLIAVFPVACSCSFIAMCV) threads the bilayer. The Extracellular segment spans residues 106 to 109 (PRTA). Residues 110 to 130 (VILTCIGVLYYLMCLFVIVSL) traverse the membrane as a helical segment. Over 131–180 (ARHLFGGRESFSTCLQYDDRPIDFRSPPFCCIIPKLPTARSTEKNIRRLE) the chain is Cytoplasmic. The helical transmembrane segment at 181-201 (WCVLQAPIVRSIIIFLDVVAV) threads the bilayer. The Extracellular segment spans residues 202-213 (AEMREDATPYIR). A helical transmembrane segment spans residues 214-234 (YSDMASLCSLLLAIFGVHTLA). Residues 235 to 240 (RVTSNK) are Cytoplasmic-facing. Residues 241 to 261 (LSAYCFMSMFRLVDISLLFFS) form a helical membrane-spanning segment. Over 262 to 291 (AQQPMIFQNVLLRFNLISCGPLLNAQENAY) the chain is Extracellular. A helical membrane pass occupies residues 292–312 (FVCNFIITCEMLLLSVLATWL). At 313–348 (LAPRHNAMFDAYRPSMALSETTASLNETEQSMILDH) the chain is on the cytoplasmic side.

Belongs to the OST-alpha family.

Its subcellular location is the cell membrane. Functionally, probable transporter. This is Organic solute transporter alpha-like protein 3 (osta-3) from Caenorhabditis elegans.